Reading from the N-terminus, the 51-residue chain is Large ribosomal subunit protein bL33 (51 aa).

Belongs to the bacterial ribosomal protein bL33 family.

The protein is Large ribosomal subunit protein bL33 of Vesicomyosocius okutanii subsp. Calyptogena okutanii (strain HA).